We begin with the raw amino-acid sequence, 369 residues long: Aminomethyltransferase (369 aa).

This sequence belongs to the GcvT family. In terms of assembly, the glycine cleavage system is composed of four proteins: P, T, L and H.

It catalyses the reaction N(6)-[(R)-S(8)-aminomethyldihydrolipoyl]-L-lysyl-[protein] + (6S)-5,6,7,8-tetrahydrofolate = N(6)-[(R)-dihydrolipoyl]-L-lysyl-[protein] + (6R)-5,10-methylene-5,6,7,8-tetrahydrofolate + NH4(+). Functionally, the glycine cleavage system catalyzes the degradation of glycine. The chain is Aminomethyltransferase from Synechococcus sp. (strain CC9311).